Consider the following 661-residue polypeptide: tRNA uridine 5-carboxymethylaminomethyl modification enzyme MnmG (661 aa).

Position 13–18 (13–18 (GGGHAG)) interacts with FAD. 285 to 299 (GPRYCPSVEDKINRF) contacts NAD(+).

Belongs to the MnmG family. As to quaternary structure, homodimer. Heterotetramer of two MnmE and two MnmG subunits. FAD serves as cofactor.

It is found in the cytoplasm. NAD-binding protein involved in the addition of a carboxymethylaminomethyl (cmnm) group at the wobble position (U34) of certain tRNAs, forming tRNA-cmnm(5)s(2)U34. The polypeptide is tRNA uridine 5-carboxymethylaminomethyl modification enzyme MnmG (Acidovorax sp. (strain JS42)).